The sequence spans 308 residues: Mycothiol acetyltransferase (308 aa).

2 N-acetyltransferase domains span residues 12–149 (DVLD…RPLG) and 165–308 (VTVR…RTET). Glu43 serves as a coordination point for 1D-myo-inositol 2-(L-cysteinylamino)-2-deoxy-alpha-D-glucopyranoside. An acetyl-CoA-binding site is contributed by 88-90 (LVV). 1D-myo-inositol 2-(L-cysteinylamino)-2-deoxy-alpha-D-glucopyranoside contacts are provided by Glu192, Lys231, and Glu240. Acetyl-CoA is bound by residues 244-246 (VGV) and 251-257 (QGGGLGR). Tyr278 contributes to the 1D-myo-inositol 2-(L-cysteinylamino)-2-deoxy-alpha-D-glucopyranoside binding site.

Belongs to the acetyltransferase family. MshD subfamily. As to quaternary structure, monomer.

It catalyses the reaction 1D-myo-inositol 2-(L-cysteinylamino)-2-deoxy-alpha-D-glucopyranoside + acetyl-CoA = mycothiol + CoA + H(+). Functionally, catalyzes the transfer of acetyl from acetyl-CoA to desacetylmycothiol (Cys-GlcN-Ins) to form mycothiol. This Streptomyces bingchenggensis (strain BCW-1) protein is Mycothiol acetyltransferase.